Consider the following 814-residue polypeptide: Coiled-coil and C2 domain-containing protein 1-like (814 aa).

Over residues M1–K11 the composition is skewed to basic and acidic residues. Disordered stretches follow at residues M1 to P136 and E157 to Q263. Over residues I25–A47 the composition is skewed to acidic residues. The segment covering D73–V85 has biased composition (basic and acidic residues). Composition is skewed to acidic residues over residues S86 to L100 and L110 to P130. The DM14 1 stretch occupies residues L143–V201. Positions P205–A230 are enriched in low complexity. Residues P231–P254 show a composition bias toward pro residues. 2 DM14 regions span residues V256 to P314 and L358 to P416. Positions A351–E378 form a coiled coil. Over residues V414–E425 the composition is skewed to pro residues. The disordered stretch occupies residues V414–Q486. Residues P426–T462 are compositionally biased toward low complexity. The segment covering T475–Q486 has biased composition (polar residues). The DM14 4 stretch occupies residues M495–P553. A C2 domain is found at R633 to Y772.

This sequence belongs to the CC2D1 family. Interacts (via DM14 domains 1 and 3) with shrb; the interaction is direct and blocks access to the surface involved in shrb polymerization. This interaction may be required for the ESCRT-III complex role in multivesicular body formation.

It is found in the cytoplasm. The protein localises to the cytosol. It localises to the apicolateral cell membrane. Its subcellular location is the cell cortex. The protein resides in the endosome. In terms of biological role, phosphatidyl inositol monophosphate binding protein involved in endosomal protein sorting through regulation of the endosomal sorting required for transport (ESCRT) pathway. Required for full activity of the ESCRT-III complex core component shrb/shrub, probably by preventing its inappropriate polymerisation. Required, but not essential, for the efficient generation of intraluminal vesicles (ILVs) in multivesicular bodies (MVBs). Involved in a late stage of the endosomal pathway targeting transmembrane proteins of the plasma membrane for lysosomal degradation. Plays a critical role in regulation of multiple signal transduction pathways, including the Notch and BMP/decapentaplegic (dpp) signaling pathways, through targeting of membrane bound receptors to multivesicular bodies, isolating them from the cytoplasm and targeting them for lysosomal degradation. Involved in targeting N/Notch for endosomal degradation, negatively regulating the Notch signaling pathway. Regulates Notch signaling in imaginal disk cells and follicle cells during oogenesis and multiple developmental processes, including development of wings, veins, legs, eyes and bristles. Restricts the activity of Notch to the dorsoventral (D/V) boundary of the wing imaginal disk. In external sensory organ development regulates Notch signaling during asymmetric cell division and differentiation of sensory organ precursor cells. May be involved in regulation of apoptosis and cell growth independent of Notch signaling. Involved in targeting tkv for endosomal degradation, negatively regulating the BMP/decapentaplegic (dpp) signaling pathway. Regulates the BMP/dpp signaling pathway in follicle cells during oogenesis, but not in imaginal disk cells during wing development. May be involved in differentiation or morphogenesis of peripodial epithelial cells in the developing imaginal disk. Involved in abscission of germline cells during oogenesis. This is Coiled-coil and C2 domain-containing protein 1-like from Drosophila pseudoobscura pseudoobscura (Fruit fly).